The chain runs to 120 residues: Glycine cleavage system H protein (120 aa).

A Lipoyl-binding domain is found at 19–101; the sequence is DGTVGISDFA…YTDGWLFRLD (83 aa). Residue K60 is modified to N6-lipoyllysine.

The protein belongs to the GcvH family. The glycine cleavage system is composed of four proteins: P, T, L and H. Requires (R)-lipoate as cofactor.

In terms of biological role, the glycine cleavage system catalyzes the degradation of glycine. The H protein shuttles the methylamine group of glycine from the P protein to the T protein. The polypeptide is Glycine cleavage system H protein (Deinococcus geothermalis (strain DSM 11300 / CIP 105573 / AG-3a)).